Consider the following 243-residue polypeptide: Ornithine decarboxylase antizyme 3 (243 aa).

Phosphoserine occurs at positions 6, 9, and 12.

Belongs to the ODC antizyme family. Interacts with ODC1 and thereby sterically blocks ODC homodimerization. Interacts with AZIN2; this interaction disrupts the interaction between the antizyme and ODC1. Interacts with GGN. As to expression, testis specific. Expressed throughout the differentiation process from spermatids to spermatozoa in the inner part of the seminiferous tubules.

The protein resides in the nucleus. It localises to the cytoplasm. Its function is as follows. Ornithine decarboxylase (ODC) antizyme protein that negatively regulates ODC activity and intracellular polyamine biosynthesis and uptake in response to increased intracellular polyamine levels. Binds to ODC monomers, inhibiting the assembly of the functional ODC homodimers. Does not target the ODC monomers for degradation, which allows a protein synthesis-independent restoration of ODC activity. Stabilizes AZIN2 by interfering with its ubiquitination. Involved in the translocation of AZNI2 from ER-Golgi intermediate compartment (ERGIC) to the cytosol. Probably plays a key role in spermatogenesis by regulating the intracellular concentration of polyamines in haploid germ cells. This is Ornithine decarboxylase antizyme 3 (Oaz3) from Mus musculus (Mouse).